A 76-amino-acid chain; its full sequence is UPF0235 protein MMAR_2910 (76 aa).

This sequence belongs to the UPF0235 family.

In Mycobacterium marinum (strain ATCC BAA-535 / M), this protein is UPF0235 protein MMAR_2910.